The primary structure comprises 166 residues: Large ribosomal subunit protein uL10 (166 aa).

Belongs to the universal ribosomal protein uL10 family. Part of the ribosomal stalk of the 50S ribosomal subunit. The N-terminus interacts with L11 and the large rRNA to form the base of the stalk. The C-terminus forms an elongated spine to which L12 dimers bind in a sequential fashion forming a multimeric L10(L12)X complex.

Its function is as follows. Forms part of the ribosomal stalk, playing a central role in the interaction of the ribosome with GTP-bound translation factors. In Streptococcus pneumoniae (strain ATCC 700669 / Spain 23F-1), this protein is Large ribosomal subunit protein uL10.